A 192-amino-acid polypeptide reads, in one-letter code: Endoribonuclease YbeY (192 aa).

His109, His113, and His119 together coordinate Zn(2+). The tract at residues 142-192 is disordered; sequence VGAALREGGPARAAETETSWTRSPTSTSTRSPSGSTARGTRARSSRAGSGR. Residues 159–180 are compositionally biased toward low complexity; that stretch reads TSWTRSPTSTSTRSPSGSTARG.

It belongs to the endoribonuclease YbeY family. It depends on Zn(2+) as a cofactor.

The protein localises to the cytoplasm. Its function is as follows. Single strand-specific metallo-endoribonuclease involved in late-stage 70S ribosome quality control and in maturation of the 3' terminus of the 16S rRNA. The chain is Endoribonuclease YbeY from Anaeromyxobacter sp. (strain Fw109-5).